Consider the following 426-residue polypeptide: Histidine--tRNA ligase (426 aa).

This sequence belongs to the class-II aminoacyl-tRNA synthetase family.

It localises to the cytoplasm. It carries out the reaction tRNA(His) + L-histidine + ATP = L-histidyl-tRNA(His) + AMP + diphosphate + H(+). The protein is Histidine--tRNA ligase of Saccharolobus shibatae (strain ATCC 51178 / DSM 5389 / JCM 8931 / NBRC 15437 / B12) (Sulfolobus shibatae).